Here is a 64-residue protein sequence, read N- to C-terminus: Translational regulator CsrA (64 aa).

It belongs to the CsrA/RsmA family. In terms of assembly, homodimer; the beta-strands of each monomer intercalate to form a hydrophobic core, while the alpha-helices form wings that extend away from the core.

It localises to the cytoplasm. A key translational regulator that binds mRNA to regulate translation initiation and/or mRNA stability. Mediates global changes in gene expression, shifting from rapid growth to stress survival by linking envelope stress, the stringent response and the catabolite repression systems. Usually binds in the 5'-UTR; binding at or near the Shine-Dalgarno sequence prevents ribosome-binding, repressing translation, binding elsewhere in the 5'-UTR can activate translation and/or stabilize the mRNA. Its function is antagonized by small RNA(s). This chain is Translational regulator CsrA, found in Thioalkalivibrio sulfidiphilus (strain HL-EbGR7).